The following is a 178-amino-acid chain: Large ribosomal subunit protein uL6 (178 aa).

Belongs to the universal ribosomal protein uL6 family. As to quaternary structure, part of the 50S ribosomal subunit.

In terms of biological role, this protein binds to the 23S rRNA, and is important in its secondary structure. It is located near the subunit interface in the base of the L7/L12 stalk, and near the tRNA binding site of the peptidyltransferase center. This Frankia casuarinae (strain DSM 45818 / CECT 9043 / HFP020203 / CcI3) protein is Large ribosomal subunit protein uL6.